The following is a 232-amino-acid chain: N-(5'-phosphoribosyl)anthranilate isomerase (232 aa).

Belongs to the TrpF family.

It carries out the reaction N-(5-phospho-beta-D-ribosyl)anthranilate = 1-(2-carboxyphenylamino)-1-deoxy-D-ribulose 5-phosphate. The protein operates within amino-acid biosynthesis; L-tryptophan biosynthesis; L-tryptophan from chorismate: step 3/5. The protein is N-(5'-phosphoribosyl)anthranilate isomerase (TRP1) of Wickerhamomyces anomalus (Yeast).